The chain runs to 144 residues: Ethylene-responsive transcription factor ERF019 (144 aa).

Positions lysine 13 to proline 72 form a DNA-binding region, AP2/ERF.

The protein belongs to the AP2/ERF transcription factor family. ERF subfamily.

It is found in the nucleus. In terms of biological role, probably acts as a transcriptional activator. Binds to the GCC-box pathogenesis-related promoter element. May be involved in the regulation of gene expression by stress factors and by components of stress signal transduction pathways. The protein is Ethylene-responsive transcription factor ERF019 (ERF019) of Arabidopsis thaliana (Mouse-ear cress).